A 573-amino-acid polypeptide reads, in one-letter code: Glutamate--tRNA ligase (573 aa).

A 'HIGH' region motif is present at residues 107–117 (PNPDGAFHLGN).

It belongs to the class-I aminoacyl-tRNA synthetase family. Glutamate--tRNA ligase type 2 subfamily.

The protein resides in the cytoplasm. The catalysed reaction is tRNA(Glu) + L-glutamate + ATP = L-glutamyl-tRNA(Glu) + AMP + diphosphate. In terms of biological role, catalyzes the attachment of glutamate to tRNA(Glu) in a two-step reaction: glutamate is first activated by ATP to form Glu-AMP and then transferred to the acceptor end of tRNA(Glu). This is Glutamate--tRNA ligase from Thermococcus kodakarensis (strain ATCC BAA-918 / JCM 12380 / KOD1) (Pyrococcus kodakaraensis (strain KOD1)).